A 157-amino-acid polypeptide reads, in one-letter code: 3-dehydroquinate dehydratase (157 aa).

The active-site Proton acceptor is the Tyr-24. Substrate contacts are provided by Asn-75, His-81, and Asp-88. His-101 acts as the Proton donor in catalysis. Substrate is bound by residues Leu-102–Ser-103 and Arg-112.

It belongs to the type-II 3-dehydroquinase family. In terms of assembly, homododecamer.

The enzyme catalyses 3-dehydroquinate = 3-dehydroshikimate + H2O. It participates in metabolic intermediate biosynthesis; chorismate biosynthesis; chorismate from D-erythrose 4-phosphate and phosphoenolpyruvate: step 3/7. Catalyzes a trans-dehydration via an enolate intermediate. This is 3-dehydroquinate dehydratase from Brucella melitensis biotype 1 (strain ATCC 23456 / CCUG 17765 / NCTC 10094 / 16M).